The following is a 133-amino-acid chain: Cytochrome c-type biogenesis protein CcmE (133 aa).

The Cytoplasmic segment spans residues 1–7 (MKKKHKR). The chain crosses the membrane as a helical; Signal-anchor for type II membrane protein span at residues 8 to 28 (LLITSGIFCFLSCIVFFILTT). Residues 29 to 133 (LKENISFFYT…YMPKVLKQIP (105 aa)) are Periplasmic-facing. Heme-binding residues include histidine 120 and tyrosine 124.

This sequence belongs to the CcmE/CycJ family.

The protein resides in the cell inner membrane. Functionally, heme chaperone required for the biogenesis of c-type cytochromes. Transiently binds heme delivered by CcmC and transfers the heme to apo-cytochromes in a process facilitated by CcmF and CcmH. The chain is Cytochrome c-type biogenesis protein CcmE from Wolbachia sp. subsp. Drosophila simulans (strain wRi).